The chain runs to 333 residues: Zinc-type alcohol dehydrogenase-like protein SACOL2177 (333 aa).

It belongs to the zinc-containing alcohol dehydrogenase family. Quinone oxidoreductase subfamily.

This Staphylococcus aureus (strain COL) protein is Zinc-type alcohol dehydrogenase-like protein SACOL2177.